Reading from the N-terminus, the 1028-residue chain is Endosome/lysosome-associated apoptosis and autophagy regulator family member 2 (1028 aa).

The signal sequence occupies residues 1–47 (MLLLTLRRAKGRDRGRPAGGPRRALSLPWSPAWICCWALAGCQAVWA). Over 48–928 (GDSSSSGRPL…TCETVDFWLK (881 aa)) the chain is Extracellular. N-linked (GlcNAc...) asparagine glycosylation is present at Asn-168. 3 disulfide bridges follow: Cys-292/Cys-309, Cys-322/Cys-345, and Cys-325/Cys-357. Asn-404 and Asn-690 each carry an N-linked (GlcNAc...) asparagine glycan. One can recognise an MRH domain in the interval 671-876 (SDCFFYHEKE…LWESAEACPL (206 aa)). Intrachain disulfides connect Cys-673–Cys-719, Cys-729–Cys-757, Cys-826–Cys-862, and Cys-838–Cys-874. A helical transmembrane segment spans residues 929–949 (VGAGVGAFTAVLLVALTCYFW). Residues 950 to 1028 (KKNQKLEYKY…QLKSSRCPNI (79 aa)) are Cytoplasmic-facing. Ser-1017 carries the post-translational modification Phosphoserine.

The protein belongs to the ELAPOR family.

It localises to the cell membrane. Its function is as follows. Functions as a regulator of the BMP signaling pathway and may be involved in epidermal differentiation. The sequence is that of Endosome/lysosome-associated apoptosis and autophagy regulator family member 2 from Mus musculus (Mouse).